Here is a 245-residue protein sequence, read N- to C-terminus: tRNA pseudouridine synthase A (245 aa).

The Nucleophile role is filled by Asp52. Substrate is bound at residue Tyr111.

This sequence belongs to the tRNA pseudouridine synthase TruA family. Homodimer.

It catalyses the reaction uridine(38/39/40) in tRNA = pseudouridine(38/39/40) in tRNA. In terms of biological role, formation of pseudouridine at positions 38, 39 and 40 in the anticodon stem and loop of transfer RNAs. The sequence is that of tRNA pseudouridine synthase A from Rickettsia africae (strain ESF-5).